Reading from the N-terminus, the 140-residue chain is Small ribosomal subunit protein bS16 (140 aa).

Residues 86-140 (TVGKAKQAAKREEEAKQAAKEAAEAKAAAEAEAAAAAEAAKAEDAPDGETESSEG) are disordered. Residues 94–114 (AKREEEAKQAAKEAAEAKAAA) show a composition bias toward basic and acidic residues. Residues 115 to 124 (EAEAAAAAEA) are compositionally biased toward low complexity. A compositionally biased stretch (acidic residues) spans 130–140 (APDGETESSEG).

This sequence belongs to the bacterial ribosomal protein bS16 family.

The protein is Small ribosomal subunit protein bS16 of Parasynechococcus marenigrum (strain WH8102).